Here is a 263-residue protein sequence, read N- to C-terminus: (2Z,6E)-farnesyl diphosphate synthase (263 aa).

Aspartate 40 is a catalytic residue. Aspartate 40 contributes to the Mg(2+) binding site. Substrate is bound by residues 41-44 (GNRR), tryptophan 45, and 86-88 (STE). The active-site Proton acceptor is asparagine 89. Substrate is bound by residues arginine 92, arginine 212, and 218-220 (RLS). Residue glutamate 231 participates in Mg(2+) binding.

Belongs to the UPP synthase family. Z-FPP synthase subfamily. In terms of assembly, homodimer. Requires Mg(2+) as cofactor.

The protein resides in the cell membrane. It carries out the reaction isopentenyl diphosphate + (2E)-geranyl diphosphate = (2Z,6E)-farnesyl diphosphate + diphosphate. Catalyzes the condensation of only one isopentenyl pyrophosphate (IPP) unit in the cis configuration to E-geranyl diphosphate (E-GPP) generating the 15 carbon product (2Z,6E)-farnesyl diphosphate (Z-FPP or EZ-FPP). Z-FPP is the precursor of decaprenyl diphosphate, which has a central role in the biosynthesis of the mycobacterial cell wall. This is (2Z,6E)-farnesyl diphosphate synthase (uppS) from Mycolicibacterium smegmatis (strain ATCC 700084 / mc(2)155) (Mycobacterium smegmatis).